Consider the following 162-residue polypeptide: Caveolin-2 (162 aa).

Residues 1 to 86 lie on the Cytoplasmic side of the membrane; sequence MGLETEKADV…FEISKYVMYK (86 aa). Position 19 is a phosphotyrosine; by SRC (Tyr19). Phosphoserine occurs at positions 20 and 23. At Tyr27 the chain carries Phosphotyrosine; by SRC. Ser36 bears the Phosphoserine mark. Positions 87 to 107 form an intramembrane region, helical; the sequence is FLTVFLAIPLAFIAGILFATL. Over 108-162 the chain is Cytoplasmic; the sequence is SCLHIWILMPFVKTCLMVLPSVQTIWKSVTDVFIAPLCTSIGRSFSSVSLQLSQD.

It belongs to the caveolin family. In terms of assembly, monomer or homodimer. Interacts with CAV1; the interaction forms a stable heterooligomeric complex that is required for targeting to lipid rafts and for caveolae formation. Tyrosine phosphorylated forms do not form heterooligomers with the Tyr-19-phosphorylated form existing as a monomer or dimer, and the Tyr-27-form as a monomer only. Interacts (tyrosine phosphorylated form) with the SH2 domain-containing proteins, RASA1, NCK1 and SRC. Interacts (tyrosine phosphorylated form) with INSR, the interaction (Tyr-27-phosphorylated form) is increased on insulin stimulation. Interacts (Tyr-19 phosphorylated form) with MAPK1 (phosphorylated form); the interaction, promoted by insulin, leads to nuclear location and MAPK1 activation. Interacts with STAT3; the interaction is increased on insulin-induced tyrosine phosphorylation leading to STAT activation. Post-translationally, phosphorylated on serine and tyrosine residues. CAV1 promotes phosphorylation on Ser-23 which then targets the complex to the plasma membrane, lipid rafts and caveolae. Phosphorylation on Ser-36 appears to modulate mitosis in endothelial cells. Phosphorylation on both Tyr-19 and Tyr-27 is required for insulin-induced 'Ser-727' phosphorylation of STAT3 and its activation. Phosphorylation on Tyr-19 is required for insulin-induced phosphorylation of MAPK1 and DNA binding of STAT3. Tyrosine phosphorylation is induced by both EGF and insulin (By. similarity).

The protein localises to the nucleus. Its subcellular location is the cytoplasm. The protein resides in the golgi apparatus membrane. It localises to the cell membrane. It is found in the membrane. The protein localises to the caveola. Functionally, may act as a scaffolding protein within caveolar membranes. Interacts directly with G-protein alpha subunits and can functionally regulate their activity. Acts as an accessory protein in conjunction with CAV1 in targeting to lipid rafts and driving caveolae formation. The Ser-36 phosphorylated form has a role in modulating mitosis in endothelial cells. Positive regulator of cellular mitogenesis of the MAPK signaling pathway. Required for the insulin-stimulated nuclear translocation and activation of MAPK1 and STAT3, and the subsequent regulation of cell cycle progression. In Papio anubis (Olive baboon), this protein is Caveolin-2 (CAV2).